A 156-amino-acid chain; its full sequence is Transcription factor MafF (156 aa).

The tract at residues 51–76 (RLKQRRRTLKNRGYAASCRVKRVCQK) is basic motif. Positions 51–114 (RLKQRRRTLK…DALRGKCEAL (64 aa)) constitute a bZIP domain. Residues 79–93 (LQKQKSELEREVDKL) form a leucine-zipper region.

The protein belongs to the bZIP family. Maf subfamily. Monomer and homo- or heterodimer. Interacts with MIP. Forms high affinity heterodimers with members of the CNC-bZIP family such as NFE2L1/NRF1. In terms of tissue distribution, highly expressed in the lung, lower expression in the brain, thymus, liver, spleen, intestine, kidney, heart, muscle, and ovary. Not significantly expressed in hematopoietic cells.

It localises to the nucleus. In terms of biological role, since they lack a putative transactivation domain, the small Mafs behave as transcriptional repressors when they dimerize among themselves. However, they seem to serve as transcriptional activators by dimerizing with other (usually larger) basic-zipper proteins, such as NFE2L1/NRF1, and recruiting them to specific DNA-binding sites. Interacts with the upstream promoter region of the oxytocin receptor gene. May be a transcriptional enhancer in the up-regulation of the oxytocin receptor gene at parturition. This chain is Transcription factor MafF (Maff), found in Mus musculus (Mouse).